The sequence spans 249 residues: Exosome complex component Rrp4 (249 aa).

Residues 72–143 enclose the S1 motif domain; the sequence is GDTIIGLVED…RTISPVLTVK (72 aa). The region spanning 151-213 is the KH domain; sequence PLGTVMDIMP…EALIEAINII (63 aa).

This sequence belongs to the RRP4 family. Component of the archaeal exosome complex. Forms a trimer of Rrp4 and/or Csl4 subunits. The trimer associates with a hexameric ring-like arrangement composed of 3 Rrp41-Rrp42 heterodimers.

It is found in the cytoplasm. Functionally, non-catalytic component of the exosome, which is a complex involved in RNA degradation. Increases the RNA binding and the efficiency of RNA degradation. Confers strong poly(A) specificity to the exosome. This is Exosome complex component Rrp4 from Sulfolobus acidocaldarius (strain ATCC 33909 / DSM 639 / JCM 8929 / NBRC 15157 / NCIMB 11770).